Consider the following 1133-residue polypeptide: Trafficking protein particle complex subunit 11 (1133 aa).

Lysine 245 carries the post-translational modification N6-acetyllysine.

This sequence belongs to the TRAPPC11 family. In terms of assembly, component of the multisubunit TRAPP (transport protein particle) complex, which includes at least TRAPPC2, TRAPPC2L, TRAPPC3, TRAPPC3L, TRAPPC4, TRAPPC5, TRAPPC8, TRAPPC9, TRAPPC10, TRAPPC11 and TRAPPC12.

The protein resides in the golgi apparatus. It localises to the cis-Golgi network. Functionally, involved in endoplasmic reticulum to Golgi apparatus trafficking at a very early stage. This Homo sapiens (Human) protein is Trafficking protein particle complex subunit 11 (TRAPPC11).